A 360-amino-acid polypeptide reads, in one-letter code: Phospho-N-acetylmuramoyl-pentapeptide-transferase (360 aa).

The next 10 helical transmembrane spans lie at 25–45, 73–93, 94–114, 134–154, 173–193, 198–218, 240–260, 262–282, 287–307, and 337–357; these read RTIYASLTALVISFVLGPWLI, TMGGVLIMSAVMFSTLLWADL, TNAYVWIALGVTFGFGLIGFV, FCLQVVVAGIAGTVLVYGLNG, PGYVLFAILVMVGASNAVNLT, GLAIVPVAIAAGTYMIFAYVA, VFCGALVGAGLGFLWYNAYPA, IFMGDVGSLPLGGALGVVAIL, LALVIVGGLFVMEAVSVILQV, and KVIVRFWIIAIMLALLSVSTL.

It belongs to the glycosyltransferase 4 family. MraY subfamily. Mg(2+) is required as a cofactor.

The protein localises to the cell inner membrane. The enzyme catalyses UDP-N-acetyl-alpha-D-muramoyl-L-alanyl-gamma-D-glutamyl-meso-2,6-diaminopimeloyl-D-alanyl-D-alanine + di-trans,octa-cis-undecaprenyl phosphate = di-trans,octa-cis-undecaprenyl diphospho-N-acetyl-alpha-D-muramoyl-L-alanyl-D-glutamyl-meso-2,6-diaminopimeloyl-D-alanyl-D-alanine + UMP. Its pathway is cell wall biogenesis; peptidoglycan biosynthesis. Functionally, catalyzes the initial step of the lipid cycle reactions in the biosynthesis of the cell wall peptidoglycan: transfers peptidoglycan precursor phospho-MurNAc-pentapeptide from UDP-MurNAc-pentapeptide onto the lipid carrier undecaprenyl phosphate, yielding undecaprenyl-pyrophosphoryl-MurNAc-pentapeptide, known as lipid I. This is Phospho-N-acetylmuramoyl-pentapeptide-transferase from Desulfatibacillum aliphaticivorans.